The chain runs to 356 residues: tRNA N6-adenosine threonylcarbamoyltransferase (356 aa).

Positions 115 and 119 each coordinate Fe cation. Substrate is bound by residues Leu138–Gly142, Asp171, Gly184, and Asn283. Asp311 contributes to the Fe cation binding site.

This sequence belongs to the KAE1 / TsaD family. The cofactor is Fe(2+).

Its subcellular location is the cytoplasm. It catalyses the reaction L-threonylcarbamoyladenylate + adenosine(37) in tRNA = N(6)-L-threonylcarbamoyladenosine(37) in tRNA + AMP + H(+). In terms of biological role, required for the formation of a threonylcarbamoyl group on adenosine at position 37 (t(6)A37) in tRNAs that read codons beginning with adenine. Is involved in the transfer of the threonylcarbamoyl moiety of threonylcarbamoyl-AMP (TC-AMP) to the N6 group of A37, together with TsaE and TsaB. TsaD likely plays a direct catalytic role in this reaction. This chain is tRNA N6-adenosine threonylcarbamoyltransferase, found in Prochlorococcus marinus (strain NATL2A).